A 342-amino-acid chain; its full sequence is Isopentenyl-diphosphate delta-isomerase (342 aa).

11 to 12 contacts substrate; sequence RK. Residues serine 68, 69–71, serine 99, and asparagine 128 each bind FMN; that span reads SMT. Residue 99–101 coordinates substrate; that stretch reads SQR. Glutamine 162 serves as a coordination point for substrate. Glutamate 163 is a Mg(2+) binding site. Residues lysine 194, serine 219, threonine 224, 275–277, and 296–297 contribute to the FMN site; these read GVR and AK.

This sequence belongs to the IPP isomerase type 2 family. Homooctamer. Dimer of tetramers. FMN is required as a cofactor. Requires NADPH as cofactor. Mg(2+) serves as cofactor.

It localises to the cytoplasm. It catalyses the reaction isopentenyl diphosphate = dimethylallyl diphosphate. Its function is as follows. Involved in the biosynthesis of isoprenoids. Catalyzes the 1,3-allylic rearrangement of the homoallylic substrate isopentenyl (IPP) to its allylic isomer, dimethylallyl diphosphate (DMAPP). This Legionella pneumophila (strain Corby) protein is Isopentenyl-diphosphate delta-isomerase.